A 267-amino-acid chain; its full sequence is Acetyl-coenzyme A carboxylase carboxyl transferase subunit beta 1 (267 aa).

One can recognise a CoA carboxyltransferase N-terminal domain in the interval 9 to 267 (TWQACPKCGR…NYGIGRSAHG (259 aa)). Residues Cys-13, Cys-16, Cys-31, and Cys-34 each coordinate Zn(2+). Residues 13 to 34 (CPKCGRHVHQRQWGTYQQCPYC) form a C4-type zinc finger.

It belongs to the AccD/PCCB family. As to quaternary structure, acetyl-CoA carboxylase is a heterohexamer composed of biotin carboxyl carrier protein (AccB), biotin carboxylase (AccC) and two subunits each of ACCase subunit alpha (AccA) and ACCase subunit beta (AccD). Requires Zn(2+) as cofactor.

Its subcellular location is the cytoplasm. It catalyses the reaction N(6)-carboxybiotinyl-L-lysyl-[protein] + acetyl-CoA = N(6)-biotinyl-L-lysyl-[protein] + malonyl-CoA. The protein operates within lipid metabolism; malonyl-CoA biosynthesis; malonyl-CoA from acetyl-CoA: step 1/1. In terms of biological role, component of the acetyl coenzyme A carboxylase (ACC) complex. Biotin carboxylase (BC) catalyzes the carboxylation of biotin on its carrier protein (BCCP) and then the CO(2) group is transferred by the transcarboxylase to acetyl-CoA to form malonyl-CoA. This Lactiplantibacillus plantarum (strain JDM1) (Lactobacillus plantarum) protein is Acetyl-coenzyme A carboxylase carboxyl transferase subunit beta 1.